Here is a 508-residue protein sequence, read N- to C-terminus: tRNA (guanine(37)-N(1))-methyltransferase (508 aa).

A mitochondrion-targeting transit peptide spans 1–53 (MKFNFWKGLWKPKSLTPTLSHRLYRRMYTPQPPLNREMTVLDRSKFTVSLNLA). H253 serves as a coordination point for S-adenosyl-L-methionine. Positions 267 to 284 (RERKQQERAKRENHEKST) are enriched in basic and acidic residues. Residues 267–291 (RERKQQERAKRENHEKSTETAVEPD) form a disordered region. Residues 323-324 (DL), 351-352 (DG), and N402 each bind S-adenosyl-L-methionine.

Belongs to the class I-like SAM-binding methyltransferase superfamily. TRM5/TYW2 family. In terms of assembly, monomer.

Its subcellular location is the mitochondrion matrix. The protein resides in the nucleus. It is found in the cytoplasm. It carries out the reaction guanosine(37) in tRNA + S-adenosyl-L-methionine = N(1)-methylguanosine(37) in tRNA + S-adenosyl-L-homocysteine + H(+). Specifically methylates the N1 position of guanosine-37 in various cytoplasmic and mitochondrial tRNAs. Methylation is not dependent on the nature of the nucleoside 5' of the target nucleoside. This is the first step in the biosynthesis of wybutosine (yW), a modified base adjacent to the anticodon of tRNAs and required for accurate decoding. In Yarrowia lipolytica (strain CLIB 122 / E 150) (Yeast), this protein is tRNA (guanine(37)-N(1))-methyltransferase.